The following is a 1425-amino-acid chain: Rho GTPase-activating protein 31 (1425 aa).

In terms of domain architecture, Rho-GAP spans 21 to 216 (CDLTEYLESS…FILNHADQIF (196 aa)). A disordered region spans residues 258–277 (LATNHPARKERRENSLPEIV). Serine 272 bears the Phosphoserine mark. Threonine 283 is subject to Phosphothreonine. 4 positions are modified to phosphoserine: serine 343, serine 346, serine 384, and serine 464. Residues 511-522 (EEFSFQGSESGG) show a composition bias toward low complexity. Disordered regions lie at residues 511 to 621 (EEFS…GAGT), 652 to 700 (SEEE…TRDA), and 756 to 951 (IEIG…GNSH). 2 stretches are compositionally biased toward basic and acidic residues: residues 543 to 556 (AATE…EVPG) and 587 to 600 (KEAE…KVME). Over residues 603–615 (QGASQPKPSTPQE) the composition is skewed to polar residues. A Phosphothreonine modification is found at threonine 666. Residues 671-681 (ESSPAPFPFPE) show a composition bias toward pro residues. 3 positions are modified to phosphoserine: serine 685, serine 690, and serine 765. Residues 767-777 (PLTPAPPPPTP) show a composition bias toward pro residues. Position 769 is a phosphothreonine (threonine 769). The residue at position 776 (threonine 776) is a Phosphothreonine; by GSK3. Positions 789 to 804 (EGPDREDAARDSRTDV) are enriched in basic and acidic residues. A compositionally biased stretch (polar residues) spans 936–951 (LRQSHSLDSKTTGNSH). Phosphoserine is present on residues serine 961, serine 1092, serine 1093, and serine 1163. Residues 1031–1095 (KEQEPQLELS…KGKHRPSSLN (65 aa)) are disordered. 3 stretches are compositionally biased toward polar residues: residues 1196 to 1206 (QIPQPLPSQST), 1250 to 1260 (QETGASASRRQ), and 1299 to 1308 (TEPSGDNLLS). Disordered stretches follow at residues 1196-1260 (QIPQ…SRRQ) and 1291-1327 (QCRK…SRPG).

In terms of assembly, interacts with ITSN1, which inhibits GAP activity. Interacts with PARVA. Interacts with GTP-loaded RHOU. Post-translationally, phosphorylated on Thr-776 by GSK3; which reduces GAP activity. As to expression, expressed at highest levels in heart and lung.

It is found in the cell projection. Its subcellular location is the lamellipodium. It localises to the cell junction. The protein localises to the focal adhesion. Its function is as follows. Functions as a GTPase-activating protein (GAP) for RAC1 and CDC42. Required for cell spreading, polarized lamellipodia formation and cell migration. The protein is Rho GTPase-activating protein 31 (Arhgap31) of Mus musculus (Mouse).